A 151-amino-acid polypeptide reads, in one-letter code: 3-dehydroquinate dehydratase (151 aa).

Tyrosine 26 functions as the Proton acceptor in the catalytic mechanism. 3 residues coordinate substrate: asparagine 75, histidine 81, and aspartate 88. The active-site Proton donor is the histidine 101. Substrate-binding positions include 102–103 and arginine 112; that span reads LS.

It belongs to the type-II 3-dehydroquinase family. Homododecamer.

It carries out the reaction 3-dehydroquinate = 3-dehydroshikimate + H2O. The protein operates within metabolic intermediate biosynthesis; chorismate biosynthesis; chorismate from D-erythrose 4-phosphate and phosphoenolpyruvate: step 3/7. In terms of biological role, catalyzes a trans-dehydration via an enolate intermediate. This chain is 3-dehydroquinate dehydratase, found in Shewanella denitrificans (strain OS217 / ATCC BAA-1090 / DSM 15013).